The sequence spans 599 residues: Putative sensor histidine kinase NtrY-like (599 aa).

Helical transmembrane passes span 17 to 37, 44 to 64, 85 to 105, and 285 to 305; these read VLIFTLATAAIIFACATFYVI, FSTIIGFLLVDLAIFLILGVV, IVIAFSLVAAIPTIIVSVFSV, and IMFIFIALLLLFVAISFGVIF. The HAMP domain occupies 307–361; sequence AKIVKPIKKLVTATDNVKDGDLTVQVPENEVDKDEIGTLYVAFNRMIKQLSRQQR. Residues 378–589 form the Histidine kinase domain; it reads KVAHEIKNPL…IIDIKFDLKE (212 aa). At histidine 381 the chain carries Phosphohistidine; by autocatalysis.

The protein localises to the cell membrane. The catalysed reaction is ATP + protein L-histidine = ADP + protein N-phospho-L-histidine.. Its function is as follows. Member of the two-component regulatory system RC0948/RC0849. This chain is Putative sensor histidine kinase NtrY-like, found in Rickettsia conorii (strain ATCC VR-613 / Malish 7).